Here is a 531-residue protein sequence, read N- to C-terminus: Bifunctional protein TrpGD (531 aa).

Residues 3–196 (DILLLDNIDS…LAWAQQKLEP (194 aa)) form the Glutamine amidotransferase type-1 domain. An L-glutamine-binding site is contributed by 57–59 (GPG). C84 functions as the Nucleophile; for GATase activity in the catalytic mechanism. L-glutamine is bound by residues Q88 and 134–135 (SL). Catalysis depends on for GATase activity residues H170 and E172. The tract at residues 202–531 (PILEKLYQAQ…DRVTALAARG (330 aa)) is anthranilate phosphoribosyltransferase.

In the C-terminal section; belongs to the anthranilate phosphoribosyltransferase family. As to quaternary structure, monomer. Heterotetramer consisting of two non-identical subunits: a beta subunit (TrpG) and a large alpha subunit (TrpE).

The catalysed reaction is chorismate + L-glutamine = anthranilate + pyruvate + L-glutamate + H(+). The enzyme catalyses N-(5-phospho-beta-D-ribosyl)anthranilate + diphosphate = 5-phospho-alpha-D-ribose 1-diphosphate + anthranilate. The protein operates within amino-acid biosynthesis; L-tryptophan biosynthesis; L-tryptophan from chorismate: step 1/5. Its pathway is amino-acid biosynthesis; L-tryptophan biosynthesis; L-tryptophan from chorismate: step 2/5. Its activity is regulated as follows. Cooperatively feedback inhibited by tryptophan. Part of a heterotetrameric complex that catalyzes the two-step biosynthesis of anthranilate, an intermediate in the biosynthesis of L-tryptophan. In the first step, the glutamine-binding beta subunit (TrpG) of anthranilate synthase (AS) provides the glutamine amidotransferase activity which generates ammonia as a substrate that, along with chorismate, is used in the second step, catalyzed by the large alpha subunit of AS (TrpE) to produce anthranilate. In the absence of TrpG, TrpE can synthesize anthranilate directly from chorismate and high concentrations of ammonia. In addition to synthesizing anthranilate, it also catalyzes the second step of the pathway, the transfer of the phosphoribosyl group of 5-phosphorylribose-1-pyrophosphate (PRPP) to anthranilate. This chain is Bifunctional protein TrpGD (trpGD), found in Salmonella typhimurium (strain LT2 / SGSC1412 / ATCC 700720).